Here is a 404-residue protein sequence, read N- to C-terminus: GTPase Obg (404 aa).

Residues 1–159 (MKFIDEARIE…RALRLELKVL (159 aa)) enclose the Obg domain. The interval 22 to 43 (SFRREKFIPRGGPDGGDGGRGG) is disordered. Positions 33–43 (GPDGGDGGRGG) are enriched in gly residues. One can recognise an OBG-type G domain in the interval 160-334 (ADVGLLGMPN…LVFAIQDFLD (175 aa)). GTP is bound by residues 166–173 (GMPNAGKS), 191–195 (FTTLA), 213–216 (DIPG), 284–287 (NKLD), and 315–317 (SAL). The Mg(2+) site is built by Ser173 and Thr193. Residues 373 to 404 (LLAEGETGTGDDGRDGNENDPADEQDTNRPNH) form a disordered region.

This sequence belongs to the TRAFAC class OBG-HflX-like GTPase superfamily. OBG GTPase family. In terms of assembly, monomer. Mg(2+) is required as a cofactor.

The protein resides in the cytoplasm. In terms of biological role, an essential GTPase which binds GTP, GDP and possibly (p)ppGpp with moderate affinity, with high nucleotide exchange rates and a fairly low GTP hydrolysis rate. Plays a role in control of the cell cycle, stress response, ribosome biogenesis and in those bacteria that undergo differentiation, in morphogenesis control. This chain is GTPase Obg, found in Aromatoleum aromaticum (strain DSM 19018 / LMG 30748 / EbN1) (Azoarcus sp. (strain EbN1)).